We begin with the raw amino-acid sequence, 262 residues long: Pyridoxine 5'-phosphate synthase (262 aa).

A 3-amino-2-oxopropyl phosphate-binding site is contributed by asparagine 6. 8 to 9 (DH) contacts 1-deoxy-D-xylulose 5-phosphate. Position 17 (arginine 17) interacts with 3-amino-2-oxopropyl phosphate. The active-site Proton acceptor is the histidine 43. 1-deoxy-D-xylulose 5-phosphate-binding residues include arginine 45 and histidine 50. Glutamate 70 acts as the Proton acceptor in catalysis. Threonine 102 lines the 1-deoxy-D-xylulose 5-phosphate pocket. Catalysis depends on histidine 215, which acts as the Proton donor. 3-amino-2-oxopropyl phosphate contacts are provided by residues glycine 216 and 237 to 238 (GH).

This sequence belongs to the PNP synthase family. In terms of assembly, homooctamer; tetramer of dimers.

Its subcellular location is the cytoplasm. The catalysed reaction is 3-amino-2-oxopropyl phosphate + 1-deoxy-D-xylulose 5-phosphate = pyridoxine 5'-phosphate + phosphate + 2 H2O + H(+). It functions in the pathway cofactor biosynthesis; pyridoxine 5'-phosphate biosynthesis; pyridoxine 5'-phosphate from D-erythrose 4-phosphate: step 5/5. Its function is as follows. Catalyzes the complicated ring closure reaction between the two acyclic compounds 1-deoxy-D-xylulose-5-phosphate (DXP) and 3-amino-2-oxopropyl phosphate (1-amino-acetone-3-phosphate or AAP) to form pyridoxine 5'-phosphate (PNP) and inorganic phosphate. The protein is Pyridoxine 5'-phosphate synthase of Helicobacter pylori (strain P12).